The following is a 430-amino-acid chain: 3-phosphoshikimate 1-carboxyvinyltransferase (430 aa).

Positions 23, 24, and 28 each coordinate 3-phosphoshikimate. Position 23 (Lys23) interacts with phosphoenolpyruvate. Phosphoenolpyruvate contacts are provided by Gly95 and Arg123. Positions 169, 171, 315, and 342 each coordinate 3-phosphoshikimate. Gln171 contacts phosphoenolpyruvate. Asp315 serves as the catalytic Proton acceptor. Residues Arg346 and Arg388 each contribute to the phosphoenolpyruvate site.

It belongs to the EPSP synthase family. Monomer.

The protein resides in the cytoplasm. The enzyme catalyses 3-phosphoshikimate + phosphoenolpyruvate = 5-O-(1-carboxyvinyl)-3-phosphoshikimate + phosphate. It participates in metabolic intermediate biosynthesis; chorismate biosynthesis; chorismate from D-erythrose 4-phosphate and phosphoenolpyruvate: step 6/7. Its function is as follows. Catalyzes the transfer of the enolpyruvyl moiety of phosphoenolpyruvate (PEP) to the 5-hydroxyl of shikimate-3-phosphate (S3P) to produce enolpyruvyl shikimate-3-phosphate and inorganic phosphate. This is 3-phosphoshikimate 1-carboxyvinyltransferase from Streptococcus pyogenes serotype M1.